The sequence spans 66 residues: DNA gyrase inhibitor YacG (66 aa).

The Zn(2+) site is built by C9, C12, C28, and C32.

This sequence belongs to the DNA gyrase inhibitor YacG family. As to quaternary structure, interacts with GyrB. Zn(2+) serves as cofactor.

Inhibits all the catalytic activities of DNA gyrase by preventing its interaction with DNA. Acts by binding directly to the C-terminal domain of GyrB, which probably disrupts DNA binding by the gyrase. This is DNA gyrase inhibitor YacG from Pseudomonas fluorescens (strain SBW25).